The primary structure comprises 541 residues: Mesoderm induction early response protein 2 (541 aa).

The residue at position 11 (Ser11) is a Phosphoserine. Disordered stretches follow at residues Asp100–Met119 and Leu131–Ala186. Residues Gln140–Ser165 show a composition bias toward polar residues. One can recognise an ELM2 domain in the interval Lys194–Val291. Residues Asp296–Arg348 form the SANT domain. The disordered stretch occupies residues Val364–Gln440.

Part of a complex containing at least CDYL, MIER1, MIER2, HDAC1 and HDAC2.

It is found in the nucleus. In terms of biological role, transcriptional repressor. In Mus musculus (Mouse), this protein is Mesoderm induction early response protein 2 (Mier2).